A 568-amino-acid polypeptide reads, in one-letter code: Potassium-transporting ATPase potassium-binding subunit (568 aa).

The next 12 helical transmembrane spans lie at 7–27 (ITIG…GGFL), 65–85 (HYAL…YAIL), 136–156 (GLTV…AAII), 179–199 (LYVL…EGIP), 254–274 (LTNF…TNVF), 285–305 (WAVF…VYWA), 332–352 (FGVA…CGAV), 354–374 (AMHE…MMLG), 377–397 (IIGG…IAVF), 423–443 (MLAV…AVVV), 487–507 (ITLG…ALAI), and 530–550 (LFIG…FLPA).

Belongs to the KdpA family. The system is composed of three essential subunits: KdpA, KdpB and KdpC.

Its subcellular location is the cell inner membrane. In terms of biological role, part of the high-affinity ATP-driven potassium transport (or Kdp) system, which catalyzes the hydrolysis of ATP coupled with the electrogenic transport of potassium into the cytoplasm. This subunit binds the periplasmic potassium ions and delivers the ions to the membrane domain of KdpB through an intramembrane tunnel. This is Potassium-transporting ATPase potassium-binding subunit from Granulibacter bethesdensis (strain ATCC BAA-1260 / CGDNIH1).